Reading from the N-terminus, the 79-residue chain is ATP synthase subunit c (79 aa).

Helical transmembrane passes span 11 to 31 and 53 to 73; these read MAAA…IGIL and FFIV…LGLY.

This sequence belongs to the ATPase C chain family. In terms of assembly, F-type ATPases have 2 components, F(1) - the catalytic core - and F(0) - the membrane proton channel. F(1) has five subunits: alpha(3), beta(3), gamma(1), delta(1), epsilon(1). F(0) has three main subunits: a(1), b(2) and c(10-14). The alpha and beta chains form an alternating ring which encloses part of the gamma chain. F(1) is attached to F(0) by a central stalk formed by the gamma and epsilon chains, while a peripheral stalk is formed by the delta and b chains.

The protein localises to the cell inner membrane. Functionally, f(1)F(0) ATP synthase produces ATP from ADP in the presence of a proton or sodium gradient. F-type ATPases consist of two structural domains, F(1) containing the extramembraneous catalytic core and F(0) containing the membrane proton channel, linked together by a central stalk and a peripheral stalk. During catalysis, ATP synthesis in the catalytic domain of F(1) is coupled via a rotary mechanism of the central stalk subunits to proton translocation. In terms of biological role, key component of the F(0) channel; it plays a direct role in translocation across the membrane. A homomeric c-ring of between 10-14 subunits forms the central stalk rotor element with the F(1) delta and epsilon subunits. This chain is ATP synthase subunit c, found in Citrobacter koseri (strain ATCC BAA-895 / CDC 4225-83 / SGSC4696).